Reading from the N-terminus, the 341-residue chain is L-threonine 3-dehydrogenase (341 aa).

Cys38 provides a ligand contact to Zn(2+). Active-site charge relay system residues include Thr40 and His43. 6 residues coordinate Zn(2+): His63, Glu64, Cys93, Cys96, Cys99, and Cys107. NAD(+) is bound by residues Ile175, Asp195, Arg200, 262-264 (LGI), and 286-287 (IY).

The protein belongs to the zinc-containing alcohol dehydrogenase family. As to quaternary structure, homotetramer. Zn(2+) serves as cofactor.

Its subcellular location is the cytoplasm. It catalyses the reaction L-threonine + NAD(+) = (2S)-2-amino-3-oxobutanoate + NADH + H(+). The protein operates within amino-acid degradation; L-threonine degradation via oxydo-reductase pathway; glycine from L-threonine: step 1/2. Functionally, catalyzes the NAD(+)-dependent oxidation of L-threonine to 2-amino-3-ketobutyrate. This is L-threonine 3-dehydrogenase from Pseudoalteromonas translucida (strain TAC 125).